A 378-amino-acid polypeptide reads, in one-letter code: Tetraacyldisaccharide 4'-kinase (378 aa).

63–70 (AVGGAGKT) is an ATP binding site.

It belongs to the LpxK family.

It carries out the reaction a lipid A disaccharide + ATP = a lipid IVA + ADP + H(+). The protein operates within glycolipid biosynthesis; lipid IV(A) biosynthesis; lipid IV(A) from (3R)-3-hydroxytetradecanoyl-[acyl-carrier-protein] and UDP-N-acetyl-alpha-D-glucosamine: step 6/6. Functionally, transfers the gamma-phosphate of ATP to the 4'-position of a tetraacyldisaccharide 1-phosphate intermediate (termed DS-1-P) to form tetraacyldisaccharide 1,4'-bis-phosphate (lipid IVA). The sequence is that of Tetraacyldisaccharide 4'-kinase from Anaeromyxobacter sp. (strain K).